The chain runs to 244 residues: MLIGCASLTIQLGKRTILKDISMGVEPGEIVTIIGPNGSGKTTLLRAMIGAVAPRSGRLIRAPGLTLGYAPQTLHIDETLPMTVQRFMSLPKLGTASDIDAALSQAGVPGLEKQQIMSLSGGQLQRVLLARALLGRPRLLLLDEATQGLDPRGVADFYRQITSVRDELGCAIIMVSHELHLVMRKTDRVICLNGHICCEGEPDIVSRSPEYLALFGIDNDDEAAIALHSHGRGRSHHGSLSRAG.

Positions 3-218 (IGCASLTIQL…PEYLALFGID (216 aa)) constitute an ABC transporter domain. 35–42 (GPNGSGKT) contributes to the ATP binding site.

It belongs to the ABC transporter superfamily. Zinc importer (TC 3.A.1.15.5) family. The complex is composed of two ATP-binding proteins (ZnuC), two transmembrane proteins (ZnuB) and a solute-binding protein (ZnuA).

The protein localises to the cell inner membrane. The enzyme catalyses Zn(2+)(out) + ATP(in) + H2O(in) = Zn(2+)(in) + ADP(in) + phosphate(in) + H(+)(in). In terms of biological role, part of the ABC transporter complex ZnuABC involved in zinc import. Responsible for energy coupling to the transport system. In Hahella chejuensis (strain KCTC 2396), this protein is Zinc import ATP-binding protein ZnuC 2.